The sequence spans 179 residues: Probable WRKY transcription factor 24 (179 aa).

The WRKY DNA-binding region spans 92–157 (SDDDVLDDGY…YEGVHNHPCE (66 aa)).

Belongs to the WRKY group II-c family.

It localises to the nucleus. Functionally, transcription factor. Interacts specifically with the W box (5'-(T)TGAC[CT]-3'), a frequently occurring elicitor-responsive cis-acting element. The sequence is that of Probable WRKY transcription factor 24 (WRKY24) from Arabidopsis thaliana (Mouse-ear cress).